A 465-amino-acid chain; its full sequence is Probable dipeptidase A (465 aa).

The active site involves Cys-3.

The protein belongs to the peptidase C69 family.

The catalysed reaction is an L-aminoacyl-L-amino acid + H2O = 2 an L-alpha-amino acid. The chain is Probable dipeptidase A (pepDA) from Streptococcus pyogenes serotype M3 (strain SSI-1).